We begin with the raw amino-acid sequence, 360 residues long: Phospho-N-acetylmuramoyl-pentapeptide-transferase (360 aa).

10 helical membrane passes run 26 to 46, 74 to 94, 97 to 117, 132 to 152, 168 to 188, 199 to 219, 236 to 256, 263 to 283, 288 to 308, and 338 to 358; these read AILALLTALMFSLWWGPKLIE, MGGLLILAGIFIGVLLWGDLG, YVWVMLFVLGSFGLIGFIDDY, WKYIFQSLAALVVAFYLFYST, ILPQLGLMFIVLTYFTIVGAS, GLAIMPTVMVAAAFALIAYLS, SGELVIVCTAIVGAGLGFLWF, VFMGDVGSLSLGAALGTIAVL, ILLVIMGGVFVMETLSVILQV, and VIVRFWIISLFLVLLGLATLK.

This sequence belongs to the glycosyltransferase 4 family. MraY subfamily. Mg(2+) serves as cofactor.

It localises to the cell inner membrane. The enzyme catalyses UDP-N-acetyl-alpha-D-muramoyl-L-alanyl-gamma-D-glutamyl-meso-2,6-diaminopimeloyl-D-alanyl-D-alanine + di-trans,octa-cis-undecaprenyl phosphate = di-trans,octa-cis-undecaprenyl diphospho-N-acetyl-alpha-D-muramoyl-L-alanyl-D-glutamyl-meso-2,6-diaminopimeloyl-D-alanyl-D-alanine + UMP. It functions in the pathway cell wall biogenesis; peptidoglycan biosynthesis. Functionally, catalyzes the initial step of the lipid cycle reactions in the biosynthesis of the cell wall peptidoglycan: transfers peptidoglycan precursor phospho-MurNAc-pentapeptide from UDP-MurNAc-pentapeptide onto the lipid carrier undecaprenyl phosphate, yielding undecaprenyl-pyrophosphoryl-MurNAc-pentapeptide, known as lipid I. This chain is Phospho-N-acetylmuramoyl-pentapeptide-transferase, found in Shewanella amazonensis (strain ATCC BAA-1098 / SB2B).